The chain runs to 643 residues: MEDSEGTDGTEEDGCRAGGWFHVEAIITHGQRQVSSDEDEDETETGEDLDFIDNRVPGDGQEIPLQLYAQQTAQDDEATVQALKRKFVASPLSACSCIENDLSPRLDAISLNRKSEKAKRRLFETEPPDSGYGNTQMVVGTPEEVTGDEESQGGRPVEDQEEERQGGDGEADLTVHTPQSGTDAAGSVLTLLRSSNLKATLLSKFKDLFGVGFYELVRQFKSSKTACADWVVCAYGVYYAVAEGLKKLIQPHTQYAHIQVQTSSWGMVVFMLLRYNCAKNRDSVSKNMSMLLNIPEKHMLIEPPKLRSTPAALYWYKTAMGNGSEVYGETPEWIVRQTLVGHSMEDEQFRLSVMVQYAYDHDIVEESVLAFEYAQLADVDANAAAFLNSNCQAKYVKDAVTMCRHYKRAEREQMSMSQWITFRGNKVSEEGDWKPIVRFLRHQGVEFVSFLAAFKLFLKGVPKKNCIVFYGPADTGKSYFCMSLLQFLGGAVISYANSSSHFWLQPLSDSKIGLLDDATPQCWSYIDIYLRNLLDGHPVSIDRKHKTLLQLKCPPLMITTNTNPLEEDRWKYLRSRLTVFTFKNPFPFASPGEPLYPINNANWKCFFQRSWSRLDLNSPEEQDDNGNTGEPFRCVPGDVARTV.

Residues 28–58 are disordered; it reads THGQRQVSSDEDEDETETGEDLDFIDNRVPG. Over residues 36–51 the composition is skewed to acidic residues; that stretch reads SDEDEDETETGEDLDF. The Nuclear localization signal signature appears at 84-86; the sequence is KRK. Phosphoserine; by host occurs at positions 90 and 103. The short motif at 102–111 is the Nuclear export signal element; the sequence is LSPRLDAISL. Disordered stretches follow at residues 119-138 and 143-181; these read KRRL…TQMV and EEVT…PQSG. The segment at 180 to 346 is DNA-binding region; sequence SGTDAAGSVL…QTLVGHSMED (167 aa). One can recognise an SF3 helicase domain in the interval 445–595; sequence VEFVSFLAAF…FPFASPGEPL (151 aa). Residue 471 to 478 coordinates ATP; sequence GPADTGKS. Lys-552 participates in a covalent cross-link: Glycyl lysine isopeptide (Lys-Gly) (interchain with G-Cter in SUMO). Residues 617–643 form a disordered region; sequence NSPEEQDDNGNTGEPFRCVPGDVARTV.

Belongs to the papillomaviridae E1 protein family. Can form hexamers. Interacts with E2 protein; this interaction increases E1 DNA binding specificity. Interacts with host DNA polymerase subunit POLA2. Interacts with host single stranded DNA-binding protein RPA1. Interacts with host TOP1; this interaction stimulates the enzymatic activity of TOP1. Post-translationally, phosphorylated. In terms of processing, sumoylated.

Its subcellular location is the host nucleus. The catalysed reaction is Couples ATP hydrolysis with the unwinding of duplex DNA by translocating in the 3'-5' direction.. It catalyses the reaction ATP + H2O = ADP + phosphate + H(+). Functionally, ATP-dependent DNA 3'-5' helicase required for initiation of viral DNA replication. It forms a complex with the viral E2 protein. The E1-E2 complex binds to the replication origin which contains binding sites for both proteins. During the initial step, a dimer of E1 interacts with a dimer of protein E2 leading to a complex that binds the viral origin of replication with high specificity. Then, a second dimer of E1 displaces the E2 dimer in an ATP-dependent manner to form the E1 tetramer. Following this, two E1 monomers are added to each half of the site, which results in the formation of two E1 trimers on the viral ori. Subsequently, two hexamers will be created. The double hexamer acts as a bi-directional helicase machinery and unwinds the viral DNA and then recruits the host DNA polymerase to start replication. In Human papillomavirus type 2a, this protein is Replication protein E1.